The following is a 1332-amino-acid chain: Abscisic-aldehyde oxidase (1332 aa).

Residues 1 to 88 enclose the 2Fe-2S ferredoxin-type domain; sequence MDLEFAVNGE…GCSITTSEGL (88 aa). 3 residues coordinate [2Fe-2S] cluster: Cys-40, Cys-45, and Cys-48. In terms of domain architecture, FAD-binding PCMH-type spans 219 to 400; sequence SDHLKYRWTT…LKVEIPSWTA (182 aa).

This sequence belongs to the xanthine dehydrogenase family. In terms of assembly, aldehyde oxidases (AO) are homodimers and heterodimers of AO subunits. AO-delta is a AAO3 homodimer. AAO3 also forms a dimer with AAO2. Interacts with PUB44, and this interaction probably results in targeting of this protein to the proteasome. [2Fe-2S] cluster serves as cofactor. FAD is required as a cofactor. The cofactor is Mo-molybdopterin. In terms of tissue distribution, expressed in vascular tissues of all organs, particularly in phloem companion cells and xylem parenchymatic cells. Highly expressed in roots and rosettes, and to lower extent in seedlings, stems and flowers. Expressed at very low levels in siliques and dry seeds. Also detected in root dividing cells (tips and primordia), in mesophyll cells and inside the guard cells.

It localises to the cytoplasm. The catalysed reaction is 2-cis-(+)-abscisic aldehyde + O2 + H2O = 2-cis-(+)-abscisate + H2O2 + H(+). It catalyses the reaction 1-naphthaldehyde + O2 + H2O = 1-naphthoate + H2O2 + H(+). The enzyme catalyses indole-3-acetaldehyde + O2 + H2O = (indol-3-yl)acetate + H2O2 + H(+). Functionally, in higher plants aldehyde oxidases (AO) appear to be homo- and heterodimeric assemblies of AO subunits with probably different physiological functions. AO-delta may be involved in the last step of abscisic acid biosynthesis, at least in leaves and seeds. In vitro, AO-delta oxidizes abscisic aldehyde to abscisic acid (ABA). In vitro, AO-delta also uses 1-naphthaldehyde, indole-3-aldehyde (IAld), benzaldehyde and cinnamaldehyde as substrate; the AAO2-AAO3 dimer also uses abscisic aldehyde as substrate. This Arabidopsis thaliana (Mouse-ear cress) protein is Abscisic-aldehyde oxidase (AAO3).